The chain runs to 242 residues: Orotidine 5'-phosphate decarboxylase (242 aa).

Residues aspartate 16, lysine 37, 64 to 73 (DLKFHDIPNT), threonine 128, arginine 190, glutamine 199, glycine 219, and arginine 220 contribute to the substrate site. The Proton donor role is filled by lysine 66.

This sequence belongs to the OMP decarboxylase family. Type 1 subfamily. Homodimer.

It carries out the reaction orotidine 5'-phosphate + H(+) = UMP + CO2. Its pathway is pyrimidine metabolism; UMP biosynthesis via de novo pathway; UMP from orotate: step 2/2. Its function is as follows. Catalyzes the decarboxylation of orotidine 5'-monophosphate (OMP) to uridine 5'-monophosphate (UMP). The chain is Orotidine 5'-phosphate decarboxylase from Prochlorococcus marinus (strain AS9601).